The sequence spans 734 residues: MALRFPRFSQGLAQDPTTRRIWFGIATAHDFESHDDITEERLYQNIFASHFGQLAIIFLWTSGNLFHVAWQGNFESWVQDPLHVRPIAHAIWDPHFGQPAVEAFTRGGALGPVNIAYSGVYQWWYTIGLRTNEDLYTGALFLLFLSAISLIAGWLHLQPKWKPSVSWFKNAESRLNHHLSGLFGVSSLAWTGHLVHVAIPGSRGEYVRWNNFLDVLPHPQGLGPLFTGQWNLYAQNPDSGSHLFGTSQGAGTAILTLLGGFHPQTQSLWLTDMAHHHLAIAFIFLVAGHMYRTNFGIGHSMKDLLEAHIPPGGRLGRGHKGLYDTINNSIHFQLGLALASLGVITSLVAQHMYSLPAYAFIAQDFTTQAALYTHHQYIAGFIMTGAFAHGAIFFIRDYNPEQNEDNVLARMLDHKEAIISHLSWASLFLGFHTLGLYVHNDVMLAFGTPEKQILIEPIFAQWIQSAHGKTSYGFDVLLSSTNGPAFNAGRSIWLPGWLNAVNENSNSLFLTIGPGDFLVHHAIALGLHTTTLILVKGALDARGSKLMPDKKDFGYSFPCDGPGRGGTCDISAWDAFYLAVFWMLNTIGWVTFYWHWKHITLWQGNVSQFNESSTYLMGWLRDYLWLNSSQLINGYNPFGMNSLSVWAWMFLFGHLVWATGFMFLISWRGYWQELIETLAWAHERTPLANLIRWRDKPVALSIVQARLVGLAHFSVGYIFTYAAFLIASTSGKFG.

8 consecutive transmembrane segments (helical) span residues 46-69 (IFAS…FHVA), 135-158 (LYTG…LHLQ), 175-199 (LNHH…HVAI), 273-291 (MAHH…GHMY), 330-353 (IHFQ…QHMY), 369-395 (AALY…IFFI), 417-439 (AIIS…LYVH), and 517-535 (FLVH…LILV). Residues Cys-559 and Cys-568 each contribute to the [4Fe-4S] cluster site. Helical transmembrane passes span 575–596 (AFYL…YWHW) and 643–665 (LSVW…MFLI). Positions 654, 662, and 670 each coordinate chlorophyll a. Trp-671 contacts phylloquinone. Residues 707–727 (LVGLAHFSVGYIFTYAAFLIA) traverse the membrane as a helical segment.

Belongs to the PsaA/PsaB family. The PsaA/B heterodimer binds the P700 chlorophyll special pair and subsequent electron acceptors. PSI consists of a core antenna complex that captures photons, and an electron transfer chain that converts photonic excitation into a charge separation. The eukaryotic PSI reaction center is composed of at least 11 subunits. Requires P700 is a chlorophyll a/chlorophyll a' dimer, A0 is one or more chlorophyll a, A1 is one or both phylloquinones and FX is a shared 4Fe-4S iron-sulfur center. as cofactor.

The protein resides in the plastid. It localises to the chloroplast thylakoid membrane. It catalyses the reaction reduced [plastocyanin] + hnu + oxidized [2Fe-2S]-[ferredoxin] = oxidized [plastocyanin] + reduced [2Fe-2S]-[ferredoxin]. In terms of biological role, psaA and PsaB bind P700, the primary electron donor of photosystem I (PSI), as well as the electron acceptors A0, A1 and FX. PSI is a plastocyanin-ferredoxin oxidoreductase, converting photonic excitation into a charge separation, which transfers an electron from the donor P700 chlorophyll pair to the spectroscopically characterized acceptors A0, A1, FX, FA and FB in turn. Oxidized P700 is reduced on the lumenal side of the thylakoid membrane by plastocyanin. In Nandina domestica (Heavenly bamboo), this protein is Photosystem I P700 chlorophyll a apoprotein A2.